Here is a 376-residue protein sequence, read N- to C-terminus: CYP enzymes assisting alcohol dehydrogenase (376 aa).

The Zn(2+) site is built by C43, T45, H64, C94, C97, C100, C108, and C173. Position 45 (T45) interacts with NAD(+). Residues T45 and H64 each contribute to the substrate site. NAD(+) contacts are provided by residues 199–204 (GLGAVG), D223, K228, 294–296 (LGA), F320, and K371.

This sequence belongs to the zinc-containing alcohol dehydrogenase family. Class-III subfamily. As to quaternary structure, homodimer. Requires Zn(2+) as cofactor.

The protein operates within alkaloid biosynthesis. Its function is as follows. May be a positive catalyzer of strictosidine production by assisting secologanin biosynthesis, thus being involved in monoterpene indole alkaloids accumulation. The chain is CYP enzymes assisting alcohol dehydrogenase from Catharanthus roseus (Madagascar periwinkle).